A 395-amino-acid polypeptide reads, in one-letter code: Homoserine O-acetyltransferase (395 aa).

Positions 65 to 363 constitute an AB hydrolase-1 domain; it reads PIVLIEHALT…SPTGHDGFLI (299 aa). S160 (nucleophile) is an active-site residue. R230 provides a ligand contact to substrate. Catalysis depends on residues D328 and H358. D359 serves as a coordination point for substrate.

This sequence belongs to the AB hydrolase superfamily. MetX family. Homodimer.

It is found in the cytoplasm. The catalysed reaction is L-homoserine + acetyl-CoA = O-acetyl-L-homoserine + CoA. It participates in amino-acid biosynthesis; L-methionine biosynthesis via de novo pathway; O-acetyl-L-homoserine from L-homoserine: step 1/1. In terms of biological role, transfers an acetyl group from acetyl-CoA to L-homoserine, forming acetyl-L-homoserine. This chain is Homoserine O-acetyltransferase, found in Corynebacterium jeikeium (strain K411).